Consider the following 341-residue polypeptide: tRNA N6-adenosine threonylcarbamoyltransferase (341 aa).

Residues His115 and His119 each coordinate Fe cation. Residues 137-141 (IVSGG), Asp170, Gly183, Asp187, and Asn276 each bind substrate. Asp304 provides a ligand contact to Fe cation.

This sequence belongs to the KAE1 / TsaD family. Requires Fe(2+) as cofactor.

Its subcellular location is the cytoplasm. It carries out the reaction L-threonylcarbamoyladenylate + adenosine(37) in tRNA = N(6)-L-threonylcarbamoyladenosine(37) in tRNA + AMP + H(+). Required for the formation of a threonylcarbamoyl group on adenosine at position 37 (t(6)A37) in tRNAs that read codons beginning with adenine. Is involved in the transfer of the threonylcarbamoyl moiety of threonylcarbamoyl-AMP (TC-AMP) to the N6 group of A37, together with TsaE and TsaB. TsaD likely plays a direct catalytic role in this reaction. This chain is tRNA N6-adenosine threonylcarbamoyltransferase, found in Staphylococcus aureus (strain USA300).